A 364-amino-acid polypeptide reads, in one-letter code: D-alanine--D-alanine ligase (364 aa).

Residues 140–346 (KKLALLEGIP…YSQLIDKLIS (207 aa)) form the ATP-grasp domain. 173 to 228 (ESEFSYPVFVKPANSGSSVGISKAKDREDLVLAIHEAFLYDTKILIEQAINAREIE) lines the ATP pocket. 3 residues coordinate Mg(2+): Asp299, Glu313, and Asn315.

It belongs to the D-alanine--D-alanine ligase family. Mg(2+) serves as cofactor. It depends on Mn(2+) as a cofactor.

It localises to the cytoplasm. It carries out the reaction 2 D-alanine + ATP = D-alanyl-D-alanine + ADP + phosphate + H(+). It participates in cell wall biogenesis; peptidoglycan biosynthesis. Cell wall formation. This Caldicellulosiruptor bescii (strain ATCC BAA-1888 / DSM 6725 / KCTC 15123 / Z-1320) (Anaerocellum thermophilum) protein is D-alanine--D-alanine ligase.